Consider the following 572-residue polypeptide: E3 ubiquitin-protein ligase ZFP91 (572 aa).

Residues 1 to 12 are compositionally biased toward basic and acidic residues; sequence MPGETEEPRSPE. Residues 1 to 308 form a disordered region; sequence MPGETEEPRS…PRLPKRRKKP (308 aa). The segment covering 61–70 has biased composition (low complexity); the sequence is AAAAAAAAAA. Residues 72 to 85 show a composition bias toward basic residues; it reads SRRRKAEYPRRRRS. Phosphoserine occurs at positions 86 and 106. The segment covering 122-131 has biased composition (basic and acidic residues); it reads LTTDKDPKEE. Low complexity predominate over residues 143–162; it reads SITTTRASRSWRSSSRTSIS. Residues 209–225 show a composition bias toward acidic residues; sequence SDEEEEEEEEMLISEEE. Composition is skewed to basic and acidic residues over residues 226-247 and 254-271; these read IPFK…ETPK and KVKE…VEVE. Residues 272 to 284 are compositionally biased toward acidic residues; the sequence is VKEEENEIREDEE. C2H2-type zinc fingers lie at residues 313–338, 344–368, 374–396, 402–424, and 432–455; these read VRCE…KYQH, YVCP…AKHH, YICE…RMIH, LQCE…MKKH, and FSCN…AKSH. The tract at residues 340–370 is interaction with MAP3K14/NIK; it reads LKKKYVCPHPSCGRLFRLQKQLLRHAKHHTD.

This sequence belongs to the krueppel C2H2-type zinc-finger protein family. In terms of assembly, interacts with MAP3K14/NIK. As to expression, found in all the examined tissues including brain, heart, kidney, lung, liver, spleen, thymus, skeletal muscle, ovary and testis.

Its subcellular location is the nucleus. It carries out the reaction S-ubiquitinyl-[E2 ubiquitin-conjugating enzyme]-L-cysteine + [acceptor protein]-L-lysine = [E2 ubiquitin-conjugating enzyme]-L-cysteine + N(6)-ubiquitinyl-[acceptor protein]-L-lysine.. It participates in protein modification; protein ubiquitination. Its function is as follows. Atypical E3 ubiquitin-protein ligase that mediates 'Lys-63'-linked ubiquitination of MAP3K14/NIK, leading to stabilize and activate MAP3K14/NIK. It thereby acts as an activator of the non-canonical NF-kappa-B2/NFKB2 pathway. May also play an important role in cell proliferation and/or anti-apoptosis. This chain is E3 ubiquitin-protein ligase ZFP91 (Zfp91), found in Mus musculus (Mouse).